We begin with the raw amino-acid sequence, 1745 residues long: DNA-directed RNA polymerase II subunit RPB1 (1745 aa).

C67, C70, C77, H80, C107, C110, C148, and C167 together coordinate Zn(2+). Mg(2+) contacts are provided by D481, D483, and D485. The segment at 810–822 (PQEFFFHAMGGRE) is bridging helix. K1247 is covalently cross-linked (Glycyl lysine isopeptide (Lys-Gly) (interchain with G-Cter in ubiquitin)). A disordered region spans residues 1530–1745 (NGPTSPGFGD…KEQKDENGTH (216 aa)). Positions 1546–1730 (SPTSPAYSPT…SPRSPSYSPS (185 aa)) are enriched in low complexity. Tandem repeats lie at residues 1552–1558 (YSPTSPS), 1559–1565 (YSPTSPS), 1566–1572 (YSPTSPS), 1573–1579 (YSPTSPS), 1580–1586 (YSPTSPS), 1587–1593 (YSPTSPS), 1594–1600 (YSPTSPS), 1601–1607 (YSPTSPS), 1608–1614 (YSPTSPS), 1615–1621 (YSPTSPS), 1622–1628 (YSPTSPS), 1629–1635 (YSPTSPS), 1636–1642 (YSPTSPS), 1643–1649 (YSPTSPS), 1650–1656 (YSPTSPS), 1657–1663 (YSPTSPS), 1664–1670 (YSPTSPS), 1671–1677 (YSPTSPS), 1678–1684 (YSPTSPS), 1685–1691 (YSPTSPS), 1692–1698 (YSPTSPS), 1699–1705 (YSPTSPS), 1706–1712 (YSPTSPS), and 1713–1719 (YSPTSPQ). Positions 1552-1726 (YSPTSPSYSP…SPQYSPRSPS (175 aa)) are C-terminal domain (CTD); 25 X 7 AA approximate tandem repeats of Y-S-P-T-S-P-[TSAN]. A 25; approximate repeat occupies 1720 to 1726 (YSPRSPS). Residues 1734 to 1745 (NDKEQKDENGTH) are compositionally biased toward basic and acidic residues.

Belongs to the RNA polymerase beta' chain family. In terms of assembly, component of the RNA polymerase II (Pol II) complex consisting of 12 subunits. In terms of processing, the tandem 7 residues repeats in the C-terminal domain (CTD) can be highly phosphorylated. The phosphorylation activates Pol II. Phosphorylation occurs mainly at residues 'Ser-2' and 'Ser-5' of the heptapeptide repeat. The phosphorylation state is believed to result from the balanced action of site-specific CTD kinases and phosphatase, and a 'CTD code' that specifies the position of Pol II within the transcription cycle has been proposed. Post-translationally, following transcription stress, the elongating form of RNA polymerase II (RNA pol IIo) is polyubiquitinated via 'Lys-63'-linkages on Lys-1247 at DNA damage sites without leading to degradation: ubiquitination promotes RNA pol IIo backtracking to allow access by the transcription-coupled nucleotide excision repair (TC-NER) machinery. Subsequent DEF1-dependent polyubiquitination by the elongin complex via 'Lys-48'-linkages may lead to proteasome-mediated degradation; presumably at stalled RNA pol II where TC-NER has failed, to halt global transcription and enable 'last resort' DNA repair pathways.

The protein localises to the nucleus. It catalyses the reaction RNA(n) + a ribonucleoside 5'-triphosphate = RNA(n+1) + diphosphate. Functionally, DNA-dependent RNA polymerase catalyzes the transcription of DNA into RNA using the four ribonucleoside triphosphates as substrates. Largest and catalytic component of RNA polymerase II which synthesizes mRNA precursors and many functional non-coding RNAs. Forms the polymerase active center together with the second largest subunit. Pol II is the central component of the basal RNA polymerase II transcription machinery. It is composed of mobile elements that move relative to each other. RPB1 is part of the core element with the central large cleft, the clamp element that moves to open and close the cleft and the jaws that are thought to grab the incoming DNA template. At the start of transcription, a single-stranded DNA template strand of the promoter is positioned within the central active site cleft of Pol II. A bridging helix emanates from RPB1 and crosses the cleft near the catalytic site and is thought to promote translocation of Pol II by acting as a ratchet that moves the RNA-DNA hybrid through the active site by switching from straight to bent conformations at each step of nucleotide addition. During transcription elongation, Pol II moves on the template as the transcript elongates. Elongation is influenced by the phosphorylation status of the C-terminal domain (CTD) of Pol II largest subunit (RPB1), which serves as a platform for assembly of factors that regulate transcription initiation, elongation, termination and mRNA processing. This is DNA-directed RNA polymerase II subunit RPB1 (RPB1) from Eremothecium gossypii (strain ATCC 10895 / CBS 109.51 / FGSC 9923 / NRRL Y-1056) (Yeast).